Here is an 801-residue protein sequence, read N- to C-terminus: Phenylalanine--tRNA ligase beta subunit (801 aa).

Positions alanine 39–phenylalanine 153 constitute a tRNA-binding domain. Residues threonine 406 to threonine 481 enclose the B5 domain. Aspartate 459, aspartate 465, glutamate 468, and glutamate 469 together coordinate Mg(2+). The region spanning threonine 708–arginine 801 is the FDX-ACB domain.

This sequence belongs to the phenylalanyl-tRNA synthetase beta subunit family. Type 1 subfamily. In terms of assembly, tetramer of two alpha and two beta subunits. Requires Mg(2+) as cofactor.

It is found in the cytoplasm. It carries out the reaction tRNA(Phe) + L-phenylalanine + ATP = L-phenylalanyl-tRNA(Phe) + AMP + diphosphate + H(+). The chain is Phenylalanine--tRNA ligase beta subunit from Streptococcus pyogenes serotype M18 (strain MGAS8232).